The primary structure comprises 815 residues: MMVGSSSEKKIPLYDEQNDYINEDHISEFAKALVWQDYDDVSTTAPTTPLNGPLDMGDLSLLGGELGNGSDDVVVGDDDDDDDDDDDDDDDDDDDKTKYSSPQLKAAQEINDEATEIGAVPATTKPDLISSKNDWFPINSENLNPNSKRTKFAKSSKSSKSKSTSPIRALQNEFRNSASFTLLRWPILTFVVIWVTILGFLYLAVRVYVALLEYFFTWTGERKRLRDKLRQSTTYKEWIENAKELDKYLGLDKWATNPKFSYYDSQTVQLTINKLKKARLNNSMPELLILLQGCLKRNFAGIENRQLYSHMYYGTKNLVQDYYKEVVICINKVIESNEINSETKYKFFKTVLQNFGKSALCLSGGACFAYTHFGIAKALLDQDLLPNIISGTSGGGLIAALLCTRTNEELKKLLVPQLARKITACEDPWYVWIPRLLKTGARFDSVAWARKSNFFTKGSTTFEEAMAMTGRKLNISTVPADPHSPVILCNDITSPHCIIWSTLLASSAVPGILNPVVLMMKNPVNGAVVPFSLGSKWRDGSLRTDIPIDALNTYYHVNFTIVSQVNPHISLFFFAPKGTVGRPVSMSKRKTAKEKFASFRGGFIATALEQLFRLEIKKWLQIVKSLDLLPHVLQQDWSNVWLQNFTGTITIWPRNRLIDFWYILSDPNEKQMEEIITKGERSMYPKILFIKNRLSIEKAIEKGRKTSTAELRETQMNVALASDDDEDYVPSDYSLAKFKDRIGVTSKDFDMLGSTLRDDDADADVDEDDNEDEDEEDEDENDYEEYDVEDLDDPYESDAFDPHIVLTKERRHTVY.

Over residues Val41 to Leu50 the composition is skewed to polar residues. Disordered regions lie at residues Val41–Lys105 and Ser140–Pro166. A compositionally biased stretch (low complexity) spans Leu54 to Val73. Over residues Val74 to Asp94 the composition is skewed to acidic residues. The segment covering Lys148–Lys160 has biased composition (basic residues). A helical membrane pass occupies residues Trp185–Val205. One can recognise a PNPLA domain in the interval Leu360 to Asn552. Positions Gly391–Gly395 match the GXSXG motif. The Nucleophile role is filled by Ser393. The active-site Proton acceptor is the Asp539. The tract at residues Gly753 to Tyr815 is disordered. Acidic residues predominate over residues Asp759–Ala799.

The protein belongs to the PLPL family.

It localises to the membrane. Its function is as follows. Probable lipid hydrolase. This chain is Patatin-like phospholipase domain-containing protein LELG_00944, found in Lodderomyces elongisporus (strain ATCC 11503 / CBS 2605 / JCM 1781 / NBRC 1676 / NRRL YB-4239) (Yeast).